The sequence spans 789 residues: DNA topoisomerase 4 subunit A (789 aa).

One can recognise a Topo IIA-type catalytic domain in the interval Leu-34–Phe-499. Tyr-122 functions as the O-(5'-phospho-DNA)-tyrosine intermediate in the catalytic mechanism.

This sequence belongs to the type II topoisomerase GyrA/ParC subunit family. ParC type 2 subfamily. As to quaternary structure, heterotetramer composed of ParC and ParE.

Its subcellular location is the cell membrane. It carries out the reaction ATP-dependent breakage, passage and rejoining of double-stranded DNA.. Topoisomerase IV is essential for chromosome segregation. It relaxes supercoiled DNA. Performs the decatenation events required during the replication of a circular DNA molecule. This chain is DNA topoisomerase 4 subunit A, found in Mycoplasma pneumoniae (strain ATCC 29342 / M129 / Subtype 1) (Mycoplasmoides pneumoniae).